A 1657-amino-acid chain; its full sequence is A disintegrin and metalloproteinase with thrombospondin motifs 7 (1657 aa).

The first 20 residues, 1–20 (MHRGPSLLLILCALASRVLG), serve as a signal peptide directing secretion. A propeptide spanning residues 21–220 (PASGLVTEGR…QQQQKRRQQR (200 aa)) is cleaved from the precursor. N84 is a glycosylation site (N-linked (GlcNAc...) asparagine). Residues 165-221 (PGHAQPHVVYKHQGSRKQAQQGDSRPSGTCGMQVPPDLEQQREHWEQQQQKRRQQRS) are disordered. Over residues 180–191 (RKQAQQGDSRPS) the composition is skewed to polar residues. Residues 192–199 (GTCGMQVP) carry the Cysteine switch motif. Zn(2+) is bound at residue C194. Residues 226–437 (KWVETLVVAD…GWGLCLDDRP (212 aa)) enclose the Peptidase M12B domain. Cystine bridges form between C302-C356, C331-C338, C350-C432, C389-C416, C459-C482, C470-C488, C477-C507, C501-C512, C535-C572, C539-C577, and C550-C562. Residue H372 participates in Zn(2+) binding. The active site involves E373. H376 and H382 together coordinate Zn(2+). One can recognise a Disintegrin domain in the interval 447-522 (VLPGVLYDVN…VPEGFQPEAV (76 aa)). Positions 523-578 (DGGWSGWSAWSDCSRSCGVGVRSSERQCTQPVPKNRGKYCVGERKRSQLCNLPACP) constitute a TSP type-1 1 domain. N622 carries an N-linked (GlcNAc...) asparagine glycan. Positions 683–794 (QTVSRTFKET…PGVHYQYTIQ (112 aa)) are spacer. 3 consecutive TSP type-1 domains span residues 804 to 863 (PEFS…EPCP), 864 to 923 (PRWW…NRHV), and 925 to 978 (CPST…QPCQ). Disordered stretches follow at residues 1009-1034 (LAPR…EELD), 1073-1127 (GGWT…GLEQ), 1140-1237 (EDTP…DVVE), 1283-1304 (GRDS…SSQH), and 1317-1384 (TVPT…ARNA). The span at 1211–1224 (PQSPIPTQPSPPSI) shows a compositional bias: pro residues. Polar residues-rich tracts occupy residues 1293–1304 (PTFSSPELSSQH) and 1327–1342 (PSGQ…TQSP). TSP type-1 domains follow at residues 1366 to 1414 (QPSL…SGND), 1417 to 1477 (CTLA…CQPG), 1479 to 1522 (TKPP…PEPG), and 1524 to 1584 (CEES…LCSH). Positions 1587 to 1627 (WPESSRPCATEDCELVEPPRCERDRLSFNFCETLRLLGRCQ) constitute a PLAC domain.

In terms of assembly, interacts with COMP. Zn(2+) is required as a cofactor. Post-translationally, N-glycosylated. Can be O-fucosylated by POFUT2 on a serine or a threonine residue found within the consensus sequence C1-X(2)-(S/T)-C2-G of the TSP type-1 repeat domains where C1 and C2 are the first and second cysteine residue of the repeat, respectively. Fucosylated repeats can then be further glycosylated by the addition of a beta-1,3-glucose residue by the glucosyltransferase, B3GALTL. Fucosylation mediates the efficient secretion of ADAMTS family members. Can also be C-glycosylated with one or two mannose molecules on tryptophan residues within the consensus sequence W-X-X-W of the TPRs. N- and C-glycosylations can also facilitate secretion. O-glycosylated proteoglycan; contains chondroitin sulfate. In terms of processing, may be cleaved by a furin endopeptidase. The precursor is sequentially processed.

It localises to the secreted. Its subcellular location is the extracellular space. It is found in the extracellular matrix. Metalloprotease. Was previously shown to degrade COMP. However, a later study found no activity against COMP. The chain is A disintegrin and metalloproteinase with thrombospondin motifs 7 (Adamts7) from Mus musculus (Mouse).